The following is a 216-amino-acid chain: V-type ATP synthase subunit D (216 aa).

The protein belongs to the V-ATPase D subunit family.

Functionally, produces ATP from ADP in the presence of a proton gradient across the membrane. This Clostridium novyi (strain NT) protein is V-type ATP synthase subunit D.